A 1169-amino-acid chain; its full sequence is Chromosome partition protein Smc (1169 aa).

32-39 provides a ligand contact to ATP; it reads PNGCGKSN. 2 coiled-coil regions span residues 170-507 and 659-1030; these read ISKY…ALGE and REQQ…FQSL.

It belongs to the SMC family. Homodimer.

The protein resides in the cytoplasm. In terms of biological role, required for chromosome condensation and partitioning. The chain is Chromosome partition protein Smc from Coxiella burnetii (strain RSA 493 / Nine Mile phase I).